A 213-amino-acid polypeptide reads, in one-letter code: Small ribosomal subunit protein uS7 (213 aa).

It belongs to the universal ribosomal protein uS7 family. As to quaternary structure, component of the small ribosomal subunit (SSU). Mature N.crassa ribosomes consist of a small (40S) and a large (60S) subunit. The 40S small subunit contains 1 molecule of ribosomal RNA (18S rRNA) and at least 32 different proteins. The large 60S subunit contains 3 rRNA molecules (26S, 5.8S and 5S rRNA) and at least 42 different proteins.

Its subcellular location is the cytoplasm. Component of the ribosome, a large ribonucleoprotein complex responsible for the synthesis of proteins in the cell. The small ribosomal subunit (SSU) binds messenger RNAs (mRNAs) and translates the encoded message by selecting cognate aminoacyl-transfer RNA (tRNA) molecules. The large subunit (LSU) contains the ribosomal catalytic site termed the peptidyl transferase center (PTC), which catalyzes the formation of peptide bonds, thereby polymerizing the amino acids delivered by tRNAs into a polypeptide chain. The nascent polypeptides leave the ribosome through a tunnel in the LSU and interact with protein factors that function in enzymatic processing, targeting, and the membrane insertion of nascent chains at the exit of the ribosomal tunnel. This chain is Small ribosomal subunit protein uS7 (rps-5), found in Neurospora crassa (strain ATCC 24698 / 74-OR23-1A / CBS 708.71 / DSM 1257 / FGSC 987).